The primary structure comprises 832 residues: Receptor-interacting serine/threonine-protein kinase 4 (832 aa).

The Protein kinase domain maps to 22–286 (FTGWEKVGSG…QGNGLNGELI (265 aa)). ATP contacts are provided by residues 28 to 36 (VGSGGFGQV) and Lys51. A Glycyl lysine isopeptide (Lys-Gly) (interchain with G-Cter in ubiquitin) cross-link involves residue Lys51. Asp143 (proton acceptor) is an active-site residue. Lys145 participates in a covalent cross-link: Glycyl lysine isopeptide (Lys-Gly) (interchain with G-Cter in ubiquitin). 2 disordered regions span residues 325-368 (QEIT…RLKR) and 389-424 (SGVS…GVSS). The span at 329–342 (SETEDLCEKPDDEV) shows a compositional bias: acidic residues. The span at 343-359 (KETAHDLDVKSPPEPRS) shows a compositional bias: basic and acidic residues. The segment covering 403-424 (RSSSESKLPSSGSGKRLSGVSS) has biased composition (low complexity). 10 ANK repeats span residues 485–514 (SGAS…NPNL), 518–547 (RGST…SVNA), 551–580 (DQWT…SVNE), 584–613 (EGRT…DVSL), 617–647 (DAWL…SVNA), 651–680 (DGRT…DVNV), 684–713 (LAQT…GKEA), 717–746 (DGYT…DVLA), 750–780 (LNQT…DLFD), and 782–811 (QGLS…HINL).

The protein belongs to the protein kinase superfamily. TKL Ser/Thr protein kinase family. Interacts with PRKCB. Interacts with TRAF1, TRAF2, TRAF3 and TRAF5. Interacts with BIRC2/c-IAP1, BIRC3/c-IAP2 and XIAP/BIRC4. May be phosphorylated by MAP3K2 and MAP3K3. In terms of processing, proteolytically cleaved by during Fas-induced apoptosis. Cleavage at Asp-388 and Asp-426. Post-translationally, polyubiquitinated with 'Lys-48' and 'Lys-63'-linked chains by BIRC2/c-IAP1 and BIRC3/c-IAP2, leading to activation of NF-kappa-B. Expressed in hair follicles and skin.

It is found in the cytoplasm. Its subcellular location is the membrane. The catalysed reaction is L-seryl-[protein] + ATP = O-phospho-L-seryl-[protein] + ADP + H(+). It catalyses the reaction L-threonyl-[protein] + ATP = O-phospho-L-threonyl-[protein] + ADP + H(+). Serine/threonine protein kinase. Required for embryonic skin development and correct skin homeostasis in adults, via phosphorylation of PKP1 and subsequent promotion of keratinocyte differentiation and cell adhesion. It is a direct transcriptional target of TP63. Plays a role in NF-kappa-B activation. The polypeptide is Receptor-interacting serine/threonine-protein kinase 4 (RIPK4) (Homo sapiens (Human)).